Reading from the N-terminus, the 381-residue chain is 4-hydroxy-3-methylbut-2-en-1-yl diphosphate synthase (flavodoxin) (381 aa).

Cys-280, Cys-283, Cys-315, and Glu-322 together coordinate [4Fe-4S] cluster.

Belongs to the IspG family. [4Fe-4S] cluster is required as a cofactor.

The catalysed reaction is (2E)-4-hydroxy-3-methylbut-2-enyl diphosphate + oxidized [flavodoxin] + H2O + 2 H(+) = 2-C-methyl-D-erythritol 2,4-cyclic diphosphate + reduced [flavodoxin]. It participates in isoprenoid biosynthesis; isopentenyl diphosphate biosynthesis via DXP pathway; isopentenyl diphosphate from 1-deoxy-D-xylulose 5-phosphate: step 5/6. In terms of biological role, converts 2C-methyl-D-erythritol 2,4-cyclodiphosphate (ME-2,4cPP) into 1-hydroxy-2-methyl-2-(E)-butenyl 4-diphosphate. The sequence is that of 4-hydroxy-3-methylbut-2-en-1-yl diphosphate synthase (flavodoxin) from Clavibacter sepedonicus (Clavibacter michiganensis subsp. sepedonicus).